A 463-amino-acid polypeptide reads, in one-letter code: MSNVVTRFAPSPTGHLHIGGARTAIFNWLLARHFGGRFVLRIEDTDTERSKQEYTDSILASMKWLGLDWDGDLIYQSERFDIYNSYIDRLLESGHAYWCECPPDEVEKMREEARAKGLKPRYNGRCRSRDLGPGDGRVVRLKAPAEGRIVFDDLVKGTVAFDVAELDDMVLRRSDGAPTYNLAVVVDDATMGVTHVLRGDDHLSNTPKQILLYQALGFDLPRFGHVPMILGPDRKKLSKRHGAKAVIEYEQYGLLPQALVNYLVRLGWSHGDQEIFALEELVEKFGTENLNSSAAGFDPDKLEWLNGHYLRETSPEELARLVLPFVAAEGFDVDASRLAQLVPLFRERANNLVELARVMRFMLVPAAEVEYDAAAVAKALTEEGRRHVAGVREALAVLGIFDREGCEKAIHDYVEGNGLKFKQVAPAVRVAVVGAMGGPGLPDMMALLGRDDVLARLDRAVAL.

The 'HIGH' region motif lies at 10–20 (PSPTGHLHIGG). The 'KMSKS' region motif lies at 236 to 240 (KLSKR). Lysine 239 provides a ligand contact to ATP.

This sequence belongs to the class-I aminoacyl-tRNA synthetase family. Glutamate--tRNA ligase type 1 subfamily. Monomer.

The protein resides in the cytoplasm. It catalyses the reaction tRNA(Glu) + L-glutamate + ATP = L-glutamyl-tRNA(Glu) + AMP + diphosphate. Catalyzes the attachment of glutamate to tRNA(Glu) in a two-step reaction: glutamate is first activated by ATP to form Glu-AMP and then transferred to the acceptor end of tRNA(Glu). The sequence is that of Glutamate--tRNA ligase from Nitratidesulfovibrio vulgaris (strain DP4) (Desulfovibrio vulgaris).